The sequence spans 500 residues: Cytochrome P450 2D26 (500 aa).

Serine 249 carries the post-translational modification Phosphoserine. Cysteine 446 is a heme binding site.

The protein belongs to the cytochrome P450 family. Requires heme as cofactor.

It localises to the endoplasmic reticulum membrane. It is found in the microsome membrane. It carries out the reaction an organic molecule + reduced [NADPH--hemoprotein reductase] + O2 = an alcohol + oxidized [NADPH--hemoprotein reductase] + H2O + H(+). In terms of biological role, cytochromes P450 are a group of heme-thiolate monooxygenases. In liver microsomes, this enzyme is involved in an NADPH-dependent electron transport pathway. It oxidizes a variety of structurally unrelated compounds, including steroids, fatty acids, and xenobiotics. The polypeptide is Cytochrome P450 2D26 (Mus musculus (Mouse)).